The chain runs to 380 residues: Queuine tRNA-ribosyltransferase (380 aa).

D96 (proton acceptor) is an active-site residue. Substrate contacts are provided by residues 96–100, D150, Q193, and G220; that span reads DSGGF. Residues 251-257 form an RNA binding region; sequence GVGAPDS. The active-site Nucleophile is the D270. Residues 275-279 form an RNA binding; important for wobble base 34 recognition region; that stretch reads TRIAR. Residues C308, C310, C313, and H339 each contribute to the Zn(2+) site.

This sequence belongs to the queuine tRNA-ribosyltransferase family. In terms of assembly, homodimer. Within each dimer, one monomer is responsible for RNA recognition and catalysis, while the other monomer binds to the replacement base PreQ1. Requires Zn(2+) as cofactor.

The enzyme catalyses 7-aminomethyl-7-carbaguanine + guanosine(34) in tRNA = 7-aminomethyl-7-carbaguanosine(34) in tRNA + guanine. Its pathway is tRNA modification; tRNA-queuosine biosynthesis. Its function is as follows. Catalyzes the base-exchange of a guanine (G) residue with the queuine precursor 7-aminomethyl-7-deazaguanine (PreQ1) at position 34 (anticodon wobble position) in tRNAs with GU(N) anticodons (tRNA-Asp, -Asn, -His and -Tyr). Catalysis occurs through a double-displacement mechanism. The nucleophile active site attacks the C1' of nucleotide 34 to detach the guanine base from the RNA, forming a covalent enzyme-RNA intermediate. The proton acceptor active site deprotonates the incoming PreQ1, allowing a nucleophilic attack on the C1' of the ribose to form the product. After dissociation, two additional enzymatic reactions on the tRNA convert PreQ1 to queuine (Q), resulting in the hypermodified nucleoside queuosine (7-(((4,5-cis-dihydroxy-2-cyclopenten-1-yl)amino)methyl)-7-deazaguanosine). The polypeptide is Queuine tRNA-ribosyltransferase (Streptococcus gordonii (strain Challis / ATCC 35105 / BCRC 15272 / CH1 / DL1 / V288)).